Consider the following 827-residue polypeptide: SH3-containing GRB2-like protein 3-interacting protein 1 (827 aa).

3 disordered regions span residues 1–116 (MMEG…SHKK), 143–199 (IGNI…ALAP), and 223–278 (IWGS…QAAT). 2 stretches are compositionally biased toward basic and acidic residues: residues 16–32 (RKKE…DRDG) and 40–53 (LPYH…REGG). Residues S78, S104, S105, S107, S149, S151, S156, and S169 each carry the phosphoserine modification. Phosphothreonine occurs at positions 180 and 182. S236 carries the post-translational modification Phosphoserine. A compositionally biased stretch (pro residues) spans 245–260 (TGTPPPLPPKTVPATP). A phosphothreonine mark is found at T247 and T259. Phosphoserine occurs at positions 265, 287, 289, 300, 316, and 319. Positions 265 to 276 (SPLTVATGNDQA) are enriched in polar residues. The segment at 315–505 (FSDASPEHVT…IAPLARAEST (191 aa)) is disordered. Residues 319–333 (SPEHVTPELTPREKV) show a composition bias toward basic and acidic residues. 3 positions are modified to phosphothreonine: T324, T328, and T335. Over residues 335–345 (TPPAASDIPAD) the composition is skewed to low complexity. Positions 346–369 (SPTPGPPGPPGSAGPPGPPGPRNV) are enriched in pro residues. Phosphoserine is present on S371. The span at 377-392 (EVQKKVAEQTFIKDDY) shows a compositional bias: basic and acidic residues. S398 carries the phosphoserine modification. Phosphothreonine is present on T409. Over residues 436–455 (ASGASSPARPATPLVPCSCS) the composition is skewed to low complexity. The segment covering 456–474 (TPPPPPPRPPSRPKLPPGK) has biased composition (pro residues). Residues 481 to 491 (SRPFSPPIHSS) show a composition bias toward low complexity. S485 is modified (phosphoserine). The 269-residue stretch at 558–826 (TLPVAAAFTE…RFAAGKYLAD (269 aa)) folds into the MHD domain. Interaction with DPF motifs-containing proteins stretches follow at residues 560–566 (PVAAAFT), 592–594 (SFP), 666–669 (TYYN), and 812–817 (SLIKKR). Residues 648–827 (MPNLMTHLKK…FAAGKYLADN (180 aa)) are necessary and sufficient to mediate interaction with CANX.

In terms of assembly, interacts with proteins essential or regulating the formation of functional clathrin-coated pits. Interacts with CANX. Interacts with AP2A1. Interacts with EPS15. Interacts with SH3GL3. Interacts with AMPH. Interacts with ITSN1 (via SH3 domains). Interacts with and REPS1. In terms of tissue distribution, specifically expressed in brain. Also detected at lower levels in spleen and adipose tissue.

It localises to the membrane. It is found in the clathrin-coated pit. Functionally, may function in clathrin-mediated endocytosis. Has both a membrane binding/tubulating activity and the ability to recruit proteins essential to the formation of functional clathrin-coated pits. Has a preference for membranes enriched in phosphatidylserine and phosphoinositides and is required for the endocytosis of the transferrin receptor. May also bind tubulin. May play a role in the regulation of energy homeostasis. The sequence is that of SH3-containing GRB2-like protein 3-interacting protein 1 (SGIP1) from Psammomys obesus (Fat sand rat).